We begin with the raw amino-acid sequence, 56 residues long: Large ribosomal subunit protein bL33c (56 aa).

This sequence belongs to the bacterial ribosomal protein bL33 family.

The protein localises to the plastid. The protein resides in the chloroplast. The protein is Large ribosomal subunit protein bL33c (rpl33) of Guillardia theta (Cryptophyte).